A 133-amino-acid chain; its full sequence is Small ribosomal subunit protein uS8 (133 aa).

The tract at residues 1–32 is disordered; that stretch reads MANHDPISDMLTRIRNASEKRHESTKVPASRM. Residues 16-25 show a composition bias toward basic and acidic residues; that stretch reads NASEKRHEST.

The protein belongs to the universal ribosomal protein uS8 family. In terms of assembly, part of the 30S ribosomal subunit. Contacts proteins S5 and S12.

Functionally, one of the primary rRNA binding proteins, it binds directly to 16S rRNA central domain where it helps coordinate assembly of the platform of the 30S subunit. This is Small ribosomal subunit protein uS8 from Synechococcus sp. (strain CC9311).